Reading from the N-terminus, the 200-residue chain is WUSCHEL-related homeobox 9 (200 aa).

The homeobox; WUS-type DNA-binding region spans 10–74 (VKCGRWNPTA…NHKARERHHH (65 aa)). Basic residues predominate over residues 70 to 80 (ERHHHKKRRRG). Residues 70–118 (ERHHHKKRRRGASSPDSGSNDDDGRAAAHEGDADLVLQPPESKREARSY) are disordered. A compositionally biased stretch (basic and acidic residues) spans 91 to 101 (DDGRAAAHEGD).

The protein belongs to the WUS homeobox family. In terms of tissue distribution, specifically expressed in the central cells of the quiescent center (QC) of the root.

The protein localises to the nucleus. In terms of biological role, transcription factor which may be involved in the specification and maintenance of the stem cells (QC cells) in the root apical meristem (RAM). In Oryza sativa subsp. japonica (Rice), this protein is WUSCHEL-related homeobox 9 (WOX9).